A 448-amino-acid chain; its full sequence is Tryptophan dimethylallyltransferase 1 (448 aa).

L-tryptophan contacts are provided by residues 80–81 (IL) and E89. 3 residues coordinate substrate: R100, K186, and Y188. Residues Y190 and R249 each contribute to the L-tryptophan site. Residues R262, K264, Y266, Q348, Y350, Y414, and Y418 each coordinate substrate.

It belongs to the tryptophan dimethylallyltransferase family. In terms of assembly, homodimer.

It carries out the reaction L-tryptophan + dimethylallyl diphosphate = 4-(3-methylbut-2-enyl)-L-tryptophan + diphosphate. Its pathway is alkaloid biosynthesis; ergot alkaloid biosynthesis. Functionally, tryptophan dimethylallyltransferase; part of the gene cluster that mediates the biosynthesis of fungal ergot alkaloid. DmaW catalyzes the first step of ergot alkaloid biosynthesis by condensing dimethylallyl diphosphate (DMAP) and tryptophan to form 4-dimethylallyl-L-tryptophan. The second step is catalyzed by the methyltransferase easF that methylates 4-dimethylallyl-L-tryptophan in the presence of S-adenosyl-L-methionine, resulting in the formation of 4-dimethylallyl-L-abrine. The catalase easC and the FAD-dependent oxidoreductase easE then transform 4-dimethylallyl-L-abrine to chanoclavine-I which is further oxidized by easD in the presence of NAD(+), resulting in the formation of chanoclavine-I aldehyde. Agroclavine dehydrogenase easG then mediates the conversion of chanoclavine-I aldehyde to agroclavine via a non-enzymatic adduct reaction: the substrate is an iminium intermediate that is formed spontaneously from chanoclavine-I aldehyde in the presence of glutathione. The presence of easA is not required to complete this reaction. Further conversion of agroclavine to paspalic acid is a two-step process involving oxidation of agroclavine to elymoclavine and of elymoclavine to paspalic acid, the second step being performed by the elymoclavine oxidase cloA. Paspalic acid is then further converted to D-lysergic acid. Ergopeptines are assembled from D-lysergic acid and three different amino acids by the D-lysergyl-peptide-synthetases composed each of a monomudular and a trimodular nonribosomal peptide synthetase subunit. LpsB and lpsC encode the monomodular subunits responsible for D-lysergic acid activation and incorporation into the ergopeptine backbone. LpsA1 and A2 subunits encode the trimodular nonribosomal peptide synthetase assembling the tripeptide portion of ergopeptines. LpsA1 is responsible for formation of the major ergopeptine, ergotamine, and lpsA2 for alpha-ergocryptine, the minor ergopeptine of the total alkaloid mixture elaborated by C.purpurea. D-lysergyl-tripeptides are assembled by the nonribosomal peptide synthetases and released as N-(D-lysergyl-aminoacyl)-lactams. Cyclolization of the D-lysergyl-tripeptides is performed by the Fe(2+)/2-ketoglutarate-dependent dioxygenase easH which introduces a hydroxyl group into N-(D-lysergyl-aminoacyl)-lactam at alpha-C of the aminoacyl residue followed by spontaneous condensation with the terminal lactam carbonyl group. This is Tryptophan dimethylallyltransferase 1 from Claviceps purpurea (Ergot fungus).